A 307-amino-acid polypeptide reads, in one-letter code: N-acetylneuraminate lyase (307 aa).

2 residues coordinate aceneuramate: T51 and T52. Y143 (proton donor) is an active-site residue. The active-site Schiff-base intermediate with substrate is K173. Aceneuramate contacts are provided by S175, G199, D201, E202, and S218.

The protein belongs to the DapA family. NanA subfamily. As to quaternary structure, homotetramer.

The protein localises to the cytoplasm. The catalysed reaction is aceneuramate = aldehydo-N-acetyl-D-mannosamine + pyruvate. It functions in the pathway amino-sugar metabolism; N-acetylneuraminate degradation. Catalyzes the cleavage of N-acetylneuraminic acid (sialic acid) to form pyruvate and N-acetylmannosamine via a Schiff base intermediate. It prevents sialic acids from being recycled and returning to the cell surface. Involved in the N-glycolylneuraminic acid (Neu5Gc) degradation pathway. The protein is N-acetylneuraminate lyase of Danio rerio (Zebrafish).